The following is a 164-amino-acid chain: uncharacterized protein (164 aa).

The tract at residues 1–77 is disordered; the sequence is MGQKKTMGTE…PCSIRDAPFH (77 aa).

This is an uncharacterized protein from Homo sapiens (Human).